The following is a 122-amino-acid chain: Small ribosomal subunit protein uS13 (122 aa).

A disordered region spans residues 99 to 122 (RGQRTHTNARTRKGPAKAIAGKKK).

It belongs to the universal ribosomal protein uS13 family. In terms of assembly, part of the 30S ribosomal subunit. Forms a loose heterodimer with protein S19. Forms two bridges to the 50S subunit in the 70S ribosome.

Functionally, located at the top of the head of the 30S subunit, it contacts several helices of the 16S rRNA. In the 70S ribosome it contacts the 23S rRNA (bridge B1a) and protein L5 of the 50S subunit (bridge B1b), connecting the 2 subunits; these bridges are implicated in subunit movement. Contacts the tRNAs in the A and P-sites. In Bradyrhizobium diazoefficiens (strain JCM 10833 / BCRC 13528 / IAM 13628 / NBRC 14792 / USDA 110), this protein is Small ribosomal subunit protein uS13.